The primary structure comprises 234 residues: Fibronectin type III domain-containing protein 4 (234 aa).

An N-terminal signal peptide occupies residues 1-44 (MPSGCHSSPPSGLRGDMASLVPLSPYLSPTVLLLVSCDLGFVRA). The Extracellular segment spans residues 45 to 167 (DRPPSPVNVT…GLDGERPLQT (123 aa)). The 94-residue stretch at 47–140 (PPSPVNVTVT…PRVHFRTLKG (94 aa)) folds into the Fibronectin type-III domain. Asn-52, Asn-97, and Asn-147 each carry an N-linked (GlcNAc...) asparagine glycan. The segment at 122–160 (GLRGESPPGPRVHFRTLKGSDRLPSNSSSPGDITVEGLD) is disordered. Residues 168–188 (GEVVIIVVVLLMWAAVIGLFC) form a helical membrane-spanning segment. Over 189–234 (RQYDIIKDNDSNNNPKEKGKGPEQSPQGRPVGTRQKKSPSINTIDV) the chain is Cytoplasmic. Residues 197-209 (NDSNNNPKEKGKG) show a composition bias toward basic and acidic residues. A disordered region spans residues 197–234 (NDSNNNPKEKGKGPEQSPQGRPVGTRQKKSPSINTIDV).

Highly expressed in the liver and the brain, including in the cortex, hypothalamus and hippocampus. Also expressed in adipose tissue.

It localises to the membrane. The protein resides in the secreted. Has anti-inflammatory properties. In the colon, acts on macrophages to down-regulate inflammation. May suppress osteoclastogenesis and mature osteoclast resorptive function. In white adipose tissue, decreases local inflammation, via interaction with GPR116. Also required for proper systemic glucose tolerance, specifically sensitizing white adipocytes to insulin and promoting glucose uptake. The insulin sensitizing function in adipose tissue is mediated by interaction with ADGRF5/GPR116 and activation of cAMP signaling. This is Fibronectin type III domain-containing protein 4 (FNDC4) from Homo sapiens (Human).